The chain runs to 322 residues: Protein mono-ADP-ribosyltransferase PARP16 (322 aa).

Over 1-287 (MQLSNRAAAR…RASSQLSWLS (287 aa)) the chain is Cytoplasmic. The PARP alpha-helical domain occupies 5–91 (NRAAAREAAS…AWDLVSWILS (87 aa)). Residues 94-279 (ILTIHSAKKA…VYSQKQPKRA (186 aa)) form the PARP catalytic domain. 3 residues coordinate NAD(+): His-152, Tyr-182, and Tyr-254. Residues 288–308 (SHWFVIMMSLYLLLLLIVSVT) traverse the membrane as a helical segment. The Lumenal portion of the chain corresponds to 309–322 (NSSVFHHFWNRVKR).

This sequence belongs to the ARTD/PARP family. In terms of assembly, interacts with KPNB1. Auto-mono-ADP-ribosylated.

It localises to the endoplasmic reticulum membrane. The enzyme catalyses L-aspartyl-[protein] + NAD(+) = 4-O-(ADP-D-ribosyl)-L-aspartyl-[protein] + nicotinamide. It catalyses the reaction L-lysyl-[protein] + NAD(+) = N(6)-(ADP-D-ribosyl)-L-lysyl-[protein] + nicotinamide + H(+). It carries out the reaction L-glutamyl-[protein] + NAD(+) = 5-O-(ADP-D-ribosyl)-L-glutamyl-[protein] + nicotinamide. With respect to regulation, in absence of activation signal, PARP16 is autoinhibited by the PARP alpha-helical domain (also named HD region), which prevents effective NAD(+)-binding. Activity is highly stimulated by signals, which unfold the PARP alpha-helical domain, relieving autoinhibition. In terms of biological role, intracellular mono-ADP-ribosyltransferase that plays a role in different processes, such as protein translation and unfolded protein response (UPR), through the mono-ADP-ribosylation of proteins involved in those processes. Acts as an inhibitor of protein translation by catalyzing mono-ADP-ribosylation of ribosomal subunits, such as RPL14 and RPS6, thereby inhibiting polysome assembly and mRNA loading. Mono-ADP-ribosylation of ribosomal subunits is promoted by NMNAT2. Involved in the unfolded protein response (UPR) by ADP-ribosylating and activating EIF2AK3 and ERN1, two important UPR effectors. May also mediate mono-ADP-ribosylation of karyopherin KPNB1 a nuclear import factor. May not modify proteins on arginine or cysteine residues compared to other mono-ADP-ribosyltransferases. This Mus musculus (Mouse) protein is Protein mono-ADP-ribosyltransferase PARP16.